The primary structure comprises 81 residues: Photosystem I iron-sulfur center (81 aa).

2 4Fe-4S ferredoxin-type domains span residues 1-31 (MAHSVKIYDTCIGCTQCVRACPTDVLEMVPW) and 39-68 (IASAPRTEDCVGCKRCESACPTDYLSVRVY). Cys-11, Cys-14, Cys-17, Cys-21, Cys-48, Cys-51, Cys-54, and Cys-58 together coordinate [4Fe-4S] cluster.

The eukaryotic PSI reaction center is composed of at least 11 subunits. Requires [4Fe-4S] cluster as cofactor.

The protein localises to the plastid. The protein resides in the chloroplast thylakoid membrane. It carries out the reaction reduced [plastocyanin] + hnu + oxidized [2Fe-2S]-[ferredoxin] = oxidized [plastocyanin] + reduced [2Fe-2S]-[ferredoxin]. In terms of biological role, apoprotein for the two 4Fe-4S centers FA and FB of photosystem I (PSI); essential for photochemical activity. FB is the terminal electron acceptor of PSI, donating electrons to ferredoxin. The C-terminus interacts with PsaA/B/D and helps assemble the protein into the PSI complex. Required for binding of PsaD and PsaE to PSI. PSI is a plastocyanin-ferredoxin oxidoreductase, converting photonic excitation into a charge separation, which transfers an electron from the donor P700 chlorophyll pair to the spectroscopically characterized acceptors A0, A1, FX, FA and FB in turn. The polypeptide is Photosystem I iron-sulfur center (Welwitschia mirabilis (Tree tumbo)).